We begin with the raw amino-acid sequence, 423 residues long: MYNLTFSPSLSSSLLSFTQQTPAAIVSSSPPDLVLQQKLRFVVETSPDRWAYVIFWQKMFDDQSDRSYLVWVDGHFCGNKNNNSQENYTTNSIECELMMDGGDDLELFYAASFYGEDRSPRKEVSDESLVWLTGPDELRFSNYERAKEAGFHGVHTLVSIPINNGIIELGSSESIIQNRNFINRVKSIFGSGKTTKHTNQTGSYPKPAVSDHSKSGNQQFGSERKRRRKLETTRVAAATKEKHHPAVLSHVEAEKQRREKLNHRFYALRAIVPKVSRMDKASLLSDAVSYIESLKSKIDDLETEIKKMKMTETDKLDNSSSNTSPSSVEYQVNQKPSKSNRGSDLEVQVKIVGEEAIIRVQTENVNHPTSALMSALMEMDCRVQHANASRLSQVMVQDVVVLVPEGLRSEDRLRTTLVRTLSL.

The tract at residues 192–243 (GKTTKHTNQTGSYPKPAVSDHSKSGNQQFGSERKRRRKLETTRVAAATKEKH) is disordered. Positions 245 to 294 (PAVLSHVEAEKQRREKLNHRFYALRAIVPKVSRMDKASLLSDAVSYIESL) constitute a bHLH domain. The disordered stretch occupies residues 312–343 (ETDKLDNSSSNTSPSSVEYQVNQKPSKSNRGS). Residues 318-327 (NSSSNTSPSS) show a composition bias toward low complexity. Polar residues predominate over residues 328 to 342 (VEYQVNQKPSKSNRG).

Homodimer.

Its subcellular location is the nucleus. This chain is Transcription factor bHLH14 (BHLH14), found in Arabidopsis thaliana (Mouse-ear cress).